A 412-amino-acid chain; its full sequence is Eukaryotic initiation factor 4A-1 (412 aa).

A2 is subject to N-acetylalanine. The Q motif signature appears at 39-67 (ESFDAMGLQENLLRGIYAYGFEKPSAIQQ). Residues 70–240 (IVPFCKGLDV…RKFMSKPVRI (171 aa)) form the Helicase ATP-binding domain. 83 to 90 (AQSGTGKT) provides a ligand contact to ATP. Residue S104 is modified to Phosphoserine. Residue T145 is modified to Phosphothreonine. A DEAD box motif is present at residues 188 to 191 (DEAD). Residues 251-412 (GIKQFYVNVE…ELPSNVADLL (162 aa)) enclose the Helicase C-terminal domain.

This sequence belongs to the DEAD box helicase family. eIF4A subfamily. In terms of assembly, eIF4F is a multi-subunit complex, the composition of which varies with external and internal environmental conditions. It is composed of at least EIF4A, EIF4E and EIF4G. Interacts with CDKA-1. Interacts with MRF1, MRF2, MRF3/ECIP1 and MRF4. Highly expressed in the whole plant.

The protein resides in the cytoplasm. The catalysed reaction is ATP + H2O = ADP + phosphate + H(+). In terms of biological role, ATP-dependent RNA helicase which is a subunit of the eIF4F complex involved in cap recognition and is required for mRNA binding to ribosome. In the current model of translation initiation, eIF4A unwinds RNA secondary structures in the 5'-UTR of mRNAs which is necessary to allow efficient binding of the small ribosomal subunit, and subsequent scanning for the initiator codon. This chain is Eukaryotic initiation factor 4A-1, found in Arabidopsis thaliana (Mouse-ear cress).